The primary structure comprises 254 residues: Nickel import ATP-binding protein NikD (254 aa).

The 240-residue stretch at 2–241 (PQQIELRNIA…PKHTVTRSLV (240 aa)) folds into the ABC transporter domain. 36–43 (GGSGSGKS) is a binding site for ATP.

This sequence belongs to the ABC transporter superfamily. Nickel importer (TC 3.A.1.5.3) family. In terms of assembly, the complex is composed of two ATP-binding proteins (NikD and NikE), two transmembrane proteins (NikB and NikC) and a solute-binding protein (NikA).

It is found in the cell inner membrane. The catalysed reaction is Ni(2+)(out) + ATP + H2O = Ni(2+)(in) + ADP + phosphate + H(+). Its function is as follows. Part of the ABC transporter complex NikABCDE involved in nickel import. Responsible for energy coupling to the transport system. This is Nickel import ATP-binding protein NikD from Shigella boydii serotype 4 (strain Sb227).